The primary structure comprises 197 residues: Phosphoheptose isomerase (197 aa).

Residues 36–197 (MVNALLNEGK…IDRQLFGSEE (162 aa)) form the SIS domain. 51-53 (NGG) is a substrate binding site. Zn(2+) contacts are provided by His60 and Glu64. Substrate-binding positions include Glu64, 93–94 (ND), 119–121 (STS), Ser124, and Gln174. Positions 174 and 182 each coordinate Zn(2+).

It belongs to the SIS family. GmhA subfamily. In terms of assembly, homotetramer. Requires Zn(2+) as cofactor.

It localises to the cytoplasm. It catalyses the reaction 2 D-sedoheptulose 7-phosphate = D-glycero-alpha-D-manno-heptose 7-phosphate + D-glycero-beta-D-manno-heptose 7-phosphate. It functions in the pathway carbohydrate biosynthesis; D-glycero-D-manno-heptose 7-phosphate biosynthesis; D-glycero-alpha-D-manno-heptose 7-phosphate and D-glycero-beta-D-manno-heptose 7-phosphate from sedoheptulose 7-phosphate: step 1/1. Its function is as follows. Catalyzes the isomerization of sedoheptulose 7-phosphate in D-glycero-D-manno-heptose 7-phosphate. This Pseudomonas aeruginosa (strain LESB58) protein is Phosphoheptose isomerase.